The chain runs to 118 residues: Large ribosomal subunit protein bL20 (118 aa).

This sequence belongs to the bacterial ribosomal protein bL20 family. In terms of assembly, part of the 50S ribosomal subunit. Contacts proteins L13 and L21.

Binds directly to 23S rRNA, probably serving to organize its structure. This chain is Large ribosomal subunit protein bL20 (rplT), found in Deinococcus radiodurans (strain ATCC 13939 / DSM 20539 / JCM 16871 / CCUG 27074 / LMG 4051 / NBRC 15346 / NCIMB 9279 / VKM B-1422 / R1).